Here is a 395-residue protein sequence, read N- to C-terminus: Ribosomal RNA small subunit methyltransferase H (395 aa).

Residues 101–103, aspartate 120, tyrosine 147, aspartate 171, and glutamine 178 contribute to the S-adenosyl-L-methionine site; that span reads GGH.

This sequence belongs to the methyltransferase superfamily. RsmH family.

The protein resides in the cytoplasm. The catalysed reaction is cytidine(1402) in 16S rRNA + S-adenosyl-L-methionine = N(4)-methylcytidine(1402) in 16S rRNA + S-adenosyl-L-homocysteine + H(+). Its function is as follows. Specifically methylates the N4 position of cytidine in position 1402 (C1402) of 16S rRNA. This chain is Ribosomal RNA small subunit methyltransferase H, found in Mycobacterium marinum (strain ATCC BAA-535 / M).